A 130-amino-acid chain; its full sequence is Small ribosomal subunit protein uS9 (130 aa).

The protein belongs to the universal ribosomal protein uS9 family.

The polypeptide is Small ribosomal subunit protein uS9 (Enterococcus faecalis (strain ATCC 700802 / V583)).